The sequence spans 521 residues: GMP synthase [glutamine-hydrolyzing] (521 aa).

A Glutamine amidotransferase type-1 domain is found at 8 to 203 (KILILDFGAQ…VVDICGCQTL (196 aa)). The active-site Nucleophile is cysteine 85. Active-site residues include histidine 177 and glutamate 179. The GMPS ATP-PPase domain maps to 204–396 (WTAANIIDDQ…LGLPRTMVYR (193 aa)). An ATP-binding site is contributed by 231–237 (SGGVDSS).

In terms of assembly, homodimer.

The catalysed reaction is XMP + L-glutamine + ATP + H2O = GMP + L-glutamate + AMP + diphosphate + 2 H(+). It participates in purine metabolism; GMP biosynthesis; GMP from XMP (L-Gln route): step 1/1. Functionally, catalyzes the synthesis of GMP from XMP. The polypeptide is GMP synthase [glutamine-hydrolyzing] (Xanthomonas oryzae pv. oryzae (strain PXO99A)).